A 104-amino-acid chain; its full sequence is 2,4-dinitrotoluene dioxygenase system, ferredoxin component (104 aa).

The tract at residues 1–21 (MSENWIDAAARDEVPRGRRDR) is disordered. The region spanning 5 to 101 (WIDAAARDEV…VKIENMRVML (97 aa)) is the Rieske domain. [2Fe-2S] cluster is bound by residues C45, H47, C64, and H67.

Belongs to the bacterial ring-hydroxylating dioxygenase ferredoxin component family. As to quaternary structure, the 2,4-dinitrotoluene dioxygenase (DNTDO) multicomponent enzyme system is composed of an electron transfer component and a dioxygenase component (iron sulfur protein (ISP)). The electron transfer component is composed of a ferredoxin reductase (DntAa) and a ferredoxin (DntAb), and the dioxygenase component is formed of a large alpha subunit (DntAc) and a small beta subunit (DntAd). [2Fe-2S] cluster serves as cofactor.

In terms of biological role, component of the 2,4-dinitrotoluene dioxygenase (DNTDO) multicomponent enzyme system which catalyzes the incorporation of both atoms of molecular oxygen into 2,4-dinitrotoluene (DNT) to form 4-methyl-5-nitrocatechol (MNC) and nitrite. Functions as an intermediate electron transfer protein via a specific interaction with iron sulfur protein components (ISP)(DntAc and DntAd). Also able to convert naphthalene to cis-(1R,2S)-dihydroxy-1,2-dihydronaphthalene. The polypeptide is 2,4-dinitrotoluene dioxygenase system, ferredoxin component (Burkholderia sp. (strain RASC)).